The following is a 211-amino-acid chain: Regulator of G-protein signaling 2 (211 aa).

The segment at 32–66 is necessary for membrane association; it reads KMKRTLLKDWKTRLSYFLQNSSAPGKPKTGKKSKQ. Positions 79 to 116 are necessary to inhibit protein synthesis; sequence LWAEAFDELLASKYGLAAFRAFLKSEFCEENIEFWLAC. Positions 83 to 199 constitute an RGS domain; sequence AFDELLASKY…LESEFYQDLC (117 aa).

As to quaternary structure, interacts with GNAQ. Does not interact with GNAI1 and GNAI3. Interacts with EIF2B5. Interacts with PRKG1 (isoform alpha). Post-translationally, phosphorylated by protein kinase C. Phosphorylation by PRKG1 leads to activation of RGS2 activity. In terms of tissue distribution, expressed in a wide variety of tissues.

Its subcellular location is the cell membrane. It localises to the cytoplasm. It is found in the nucleus. The protein resides in the nucleolus. In terms of biological role, regulates G protein-coupled receptor signaling cascades. Inhibits signal transduction by increasing the GTPase activity of G protein alpha subunits, thereby driving them into their inactive GDP-bound form. It is involved in the negative regulation of the angiotensin-activated signaling pathway. Plays a role in the regulation of blood pressure in response to signaling via G protein-coupled receptors and GNAQ. Plays a role in regulating the constriction and relaxation of vascular smooth muscle. Binds EIF2B5 and blocks its activity, thereby inhibiting the translation of mRNA into protein. The sequence is that of Regulator of G-protein signaling 2 (Rgs2) from Mus musculus (Mouse).